We begin with the raw amino-acid sequence, 229 residues long: Uridylate kinase (229 aa).

11 to 12 (GS) contributes to the ATP binding site. Gly-45 is a UMP binding site. Residues Gly-46 and Arg-50 each contribute to the ATP site. Residues Asp-67 and 114 to 120 (TEPGHTT) contribute to the UMP site. Residues Thr-140, Tyr-146, and Asp-149 each coordinate ATP.

Belongs to the UMP kinase family. In terms of assembly, homohexamer.

The protein localises to the cytoplasm. The enzyme catalyses UMP + ATP = UDP + ADP. The protein operates within pyrimidine metabolism; CTP biosynthesis via de novo pathway; UDP from UMP (UMPK route): step 1/1. Its activity is regulated as follows. Inhibited by UTP. Catalyzes the reversible phosphorylation of UMP to UDP. The sequence is that of Uridylate kinase from Thermoplasma acidophilum (strain ATCC 25905 / DSM 1728 / JCM 9062 / NBRC 15155 / AMRC-C165).